The following is an 846-amino-acid chain: Circadian locomoter output cycles protein kaput (846 aa).

A Nuclear localization signal motif is present at residues 32 to 47 (DKAKRVSRNKSEKKRR). Residues 34 to 84 (AKRVSRNKSEKKRRDQFNVLIKELGSMLPGNARKMDKSTVLQKSIDFLRKH) form the bHLH domain. Phosphoserine is present on residues Ser38 and Ser42. Lys67 participates in a covalent cross-link: Glycyl lysine isopeptide (Lys-Gly) (interchain with G-Cter in SUMO1). PAS domains lie at 107 to 177 (NEEF…LLES) and 262 to 332 (FIKE…MQYG). One can recognise a PAC domain in the interval 336–379 (SCYYRFLTKGQQWIWLQTHYYITYHQWNSRPEFIVCTHTVVSYA). Positions 371-845 (CTHTVVSYAE…SLPDPSKVQP (475 aa)) are interaction with NR3C1. Disordered regions lie at residues 392 to 411 (EESL…SDNR) and 420 to 495 (ALER…SSLT). The residue at position 408 (Ser408) is a Phosphoserine. At Ser427 the chain carries Phosphoserine; by GSK3-beta. Position 431 is a phosphoserine (Ser431). A compositionally biased stretch (polar residues) spans 447–463 (DPSSTPTKIPTDTSTPP). The tract at residues 450–570 (STPTKIPTDT…QGLQMFLQQS (121 aa)) is interaction with SIRT1. A phosphothreonine; by CDK5 mark is found at Thr451 and Thr461. Positions 478–493 (SSFSSQSINSQSVGSS) are enriched in low complexity. The implicated in the circadian rhythmicity stretch occupies residues 514-564 (FQFSAQLGAMQHLKDQLEQRTRMIEANIHRQQEELRKIQEQLQMVHGQGLQ). Low complexity-rich tracts occupy residues 624-637 (QQQT…QSQQ) and 644-654 (SQQTSLPSQTQ). Disordered stretches follow at residues 624–654 (QQQT…SQTQ), 764–783 (EQQL…QPPQ), and 811–846 (STFP…VQPQ). A compositionally biased stretch (low complexity) spans 811–829 (STFPQSHHQQHQSQQQQQL). Lys842 participates in a covalent cross-link: Glycyl lysine isopeptide (Lys-Gly) (interchain with G-Cter in SUMO1).

As to quaternary structure, component of the circadian clock oscillator which includes the CRY proteins, CLOCK or NPAS2, BMAL1 or BMAL2, CSNK1D and/or CSNK1E, TIMELESS and the PER proteins. Interacts with KMT2A; in a circadian manner. Forms a heterodimer with BMAL1. The CLOCK-BMAL1 heterodimer is required for E-box-dependent transactivation, for CLOCK nuclear translocation and degradation, and for phosphorylation of both CLOCK and BMAL1. Interacts with NR3C1 in a ligand-dependent fashion. Interacts with ESR1 and estrogen stimulates this interaction. Interacts with the complex p35/CDK5. Interacts with RELA/p65. Interacts with KAT2B, CREBBP, EP300. Interacts with ID1 and ID3. Interacts with ID2. Interacts with MTA1. Interacts with OGA. Interacts with SIRT1. Interacts with CIPC. Interacts with EZH2. Interacts with EIF4E, PIWIL1 and DDX4. Interacts with PER2 and CRY1 and the interaction with PER and CRY proteins requires translocation to the nucleus. Interacts with PER1 and CRY2. Interaction of the CLOCK-BMAL1 heterodimer with PER or CRY inhibits transcription activation. Interaction of the CLOCK-BMAL1 with CRY1 is independent of DNA but with PER2 is off DNA. The CLOCK-BMAL1 heterodimer interacts with GSK3B. Interacts with KDM5A. Interacts with MYBBP1A. Interacts with THRAP3. Interacts with MED1; this interaction requires the presence of THRAP3. Interacts with NCOA2. The CLOCK-BMAL1 heterodimer interacts with PASD1. Interacts with ASS1 and IMPDH2; in a circadian manner. Interacts with NDUFA9. Interacts with PIWIL2 (via PIWI domain). Interacts with HNF4A. In terms of processing, ubiquitinated, leading to its proteasomal degradation. Post-translationally, O-glycosylated; contains O-GlcNAc. O-glycosylation by OGT prevents protein degradation by inhibiting ubiquitination. It also stabilizes the CLOCK-BMAL1 heterodimer thereby increasing CLOCK-BMAL1-mediated transcriptional activation of PER1/2/3 and CRY1/2. Phosphorylation is dependent on the CLOCK-BMAL1 heterodimer formation. Phosphorylation enhances the transcriptional activity, alters the subcellular localization and decreases the stability of the heterodimer by promoting its degradation. Phosphorylation shows circadian variations in the liver. May be phosphorylated by CSNK1D and CKSN1E. In terms of processing, sumoylation enhances its transcriptional activity and interaction with ESR1, resulting in up-regulation of ESR1 activity. Estrogen stimulates sumoylation. Desumoylation by SENP1 negatively regulates its transcriptional activity. Sumoylation stimulates cell proliferation and increases the proportion of S phase cells in breast cancer cell lines. Post-translationally, undergoes lysosome-mediated degradation in a time-dependent manner in the liver. In terms of tissue distribution, hair follicles (at protein level). Expressed in all tissues examined including spleen, thymus, prostate, testis, ovary, small intestine, colon, leukocytes, heart, brain, placenta, lung, liver, skeletal muscle, kidney and pancreas. Highest levels in testis and skeletal muscle. Low levels in thymus, lung and liver. Expressed in all brain regions with highest levels in cerebellum. Highly expressed in the suprachiasmatic nucleus (SCN).

Its subcellular location is the nucleus. The protein localises to the cytoplasm. It localises to the cytosol. It carries out the reaction L-lysyl-[protein] + acetyl-CoA = N(6)-acetyl-L-lysyl-[protein] + CoA + H(+). With respect to regulation, there is conflicting data about the effect of NAD cofactors on activity. PubMed:11441146 suggests that the redox state of the cell can modulate the transcriptional activity of the CLOCK-BMAL1 heterodimer; NADH and NADPH enhance the DNA-binding activity of the heterodimer. PubMed:23229515 reports that NADH and NADPH have no significant effect on DNA-binding activity of the CLOCK-BMAL1 heterodimer. Transcriptional activator which forms a core component of the circadian clock. The circadian clock, an internal time-keeping system, regulates various physiological processes through the generation of approximately 24 hour circadian rhythms in gene expression, which are translated into rhythms in metabolism and behavior. It is derived from the Latin roots 'circa' (about) and 'diem' (day) and acts as an important regulator of a wide array of physiological functions including metabolism, sleep, body temperature, blood pressure, endocrine, immune, cardiovascular, and renal function. Consists of two major components: the central clock, residing in the suprachiasmatic nucleus (SCN) of the brain, and the peripheral clocks that are present in nearly every tissue and organ system. Both the central and peripheral clocks can be reset by environmental cues, also known as Zeitgebers (German for 'timegivers'). The predominant Zeitgeber for the central clock is light, which is sensed by retina and signals directly to the SCN. The central clock entrains the peripheral clocks through neuronal and hormonal signals, body temperature and feeding-related cues, aligning all clocks with the external light/dark cycle. Circadian rhythms allow an organism to achieve temporal homeostasis with its environment at the molecular level by regulating gene expression to create a peak of protein expression once every 24 hours to control when a particular physiological process is most active with respect to the solar day. Transcription and translation of core clock components (CLOCK, NPAS2, BMAL1, BMAL2, PER1, PER2, PER3, CRY1 and CRY2) plays a critical role in rhythm generation, whereas delays imposed by post-translational modifications (PTMs) are important for determining the period (tau) of the rhythms (tau refers to the period of a rhythm and is the length, in time, of one complete cycle). A diurnal rhythm is synchronized with the day/night cycle, while the ultradian and infradian rhythms have a period shorter and longer than 24 hours, respectively. Disruptions in the circadian rhythms contribute to the pathology of cardiovascular diseases, cancer, metabolic syndromes and aging. A transcription/translation feedback loop (TTFL) forms the core of the molecular circadian clock mechanism. Transcription factors, CLOCK or NPAS2 and BMAL1 or BMAL2, form the positive limb of the feedback loop, act in the form of a heterodimer and activate the transcription of core clock genes and clock-controlled genes (involved in key metabolic processes), harboring E-box elements (5'-CACGTG-3') within their promoters. The core clock genes: PER1/2/3 and CRY1/2 which are transcriptional repressors form the negative limb of the feedback loop and interact with the CLOCK|NPAS2-BMAL1|BMAL2 heterodimer inhibiting its activity and thereby negatively regulating their own expression. This heterodimer also activates nuclear receptors NR1D1/2 and RORA/B/G, which form a second feedback loop and which activate and repress BMAL1 transcription, respectively. Regulates the circadian expression of ICAM1, VCAM1, CCL2, THPO and MPL and also acts as an enhancer of the transactivation potential of NF-kappaB. Plays an important role in the homeostatic regulation of sleep. The CLOCK-BMAL1 heterodimer regulates the circadian expression of SERPINE1/PAI1, VWF, B3, CCRN4L/NOC, NAMPT, DBP, MYOD1, PPARGC1A, PPARGC1B, SIRT1, GYS2, F7, NGFR, GNRHR, BHLHE40/DEC1, ATF4, MTA1, KLF10 and also genes implicated in glucose and lipid metabolism. Promotes rhythmic chromatin opening, regulating the DNA accessibility of other transcription factors. The CLOCK-BMAL2 heterodimer activates the transcription of SERPINE1/PAI1 and BHLHE40/DEC1. The preferred binding motif for the CLOCK-BMAL1 heterodimer is 5'-CACGTGA-3', which contains a flanking adenine nucleotide at the 3-prime end of the canonical 6-nucleotide E-box sequence. CLOCK specifically binds to the half-site 5'-CAC-3', while BMAL1 binds to the half-site 5'-GTGA-3'. The CLOCK-BMAL1 heterodimer also recognizes the non-canonical E-box motifs 5'-AACGTGA-3' and 5'-CATGTGA-3'. CLOCK has an intrinsic acetyltransferase activity, which enables circadian chromatin remodeling by acetylating histones and nonhistone proteins, including its own partner BMAL1. Represses glucocorticoid receptor NR3C1/GR-induced transcriptional activity by reducing the association of NR3C1/GR to glucocorticoid response elements (GREs) via the acetylation of multiple lysine residues located in its hinge region. The acetyltransferase activity of CLOCK is as important as its transcription activity in circadian control. Acetylates metabolic enzymes IMPDH2 and NDUFA9 in a circadian manner. Facilitated by BMAL1, rhythmically interacts and acetylates argininosuccinate synthase 1 (ASS1) leading to enzymatic inhibition of ASS1 as well as the circadian oscillation of arginine biosynthesis and subsequent ureagenesis. Drives the circadian rhythm of blood pressure through transcriptional activation of ATP1B1. This Homo sapiens (Human) protein is Circadian locomoter output cycles protein kaput (CLOCK).